Consider the following 396-residue polypeptide: Tryptophan synthase beta chain (396 aa).

The residue at position 88 (Lys-88) is an N6-(pyridoxal phosphate)lysine.

This sequence belongs to the TrpB family. As to quaternary structure, tetramer of two alpha and two beta chains. It depends on pyridoxal 5'-phosphate as a cofactor.

It carries out the reaction (1S,2R)-1-C-(indol-3-yl)glycerol 3-phosphate + L-serine = D-glyceraldehyde 3-phosphate + L-tryptophan + H2O. It functions in the pathway amino-acid biosynthesis; L-tryptophan biosynthesis; L-tryptophan from chorismate: step 5/5. In terms of biological role, the beta subunit is responsible for the synthesis of L-tryptophan from indole and L-serine. The chain is Tryptophan synthase beta chain from Actinobacillus pleuropneumoniae serotype 3 (strain JL03).